The chain runs to 161 residues: Protein-export protein SecB (161 aa).

This sequence belongs to the SecB family. Homotetramer, a dimer of dimers. One homotetramer interacts with 1 SecA dimer.

It is found in the cytoplasm. One of the proteins required for the normal export of preproteins out of the cell cytoplasm. It is a molecular chaperone that binds to a subset of precursor proteins, maintaining them in a translocation-competent state. It also specifically binds to its receptor SecA. In Coxiella burnetii (strain CbuG_Q212) (Coxiella burnetii (strain Q212)), this protein is Protein-export protein SecB.